The chain runs to 209 residues: Ribosomal RNA small subunit methyltransferase G (209 aa).

Residues G77, M82, 128–129, and R143 contribute to the S-adenosyl-L-methionine site; that span reads VE.

This sequence belongs to the methyltransferase superfamily. RNA methyltransferase RsmG family.

The protein localises to the cytoplasm. The catalysed reaction is guanosine(527) in 16S rRNA + S-adenosyl-L-methionine = N(7)-methylguanosine(527) in 16S rRNA + S-adenosyl-L-homocysteine. Specifically methylates the N7 position of guanine in position 527 of 16S rRNA. This Chromobacterium violaceum (strain ATCC 12472 / DSM 30191 / JCM 1249 / CCUG 213 / NBRC 12614 / NCIMB 9131 / NCTC 9757 / MK) protein is Ribosomal RNA small subunit methyltransferase G.